The primary structure comprises 965 residues: Meiosis-specific coiled-coil domain-containing protein MEIOC (965 aa).

Disordered regions lie at residues 1 to 22 and 946 to 965; these read MEVSGGDTCRPRHPQGLREGPE and VHESINSSNPMNQRGETSKH. Over residues 949 to 965 the composition is skewed to polar residues; sequence SINSSNPMNQRGETSKH.

Interacts with YTHDC2; binds transcripts that regulate the mitotic cell cycle inhibiting progression into metaphase, thereby allowing meiotic prophase to proceed normally. Interacts with RBM46. In terms of tissue distribution, expressed specifically in fetal ovary and postnatal and adult testes (at protein level). In adult testis expressed in spermatocytes, beginning in preleptotene and extending through most stages of meiotic prophase I, including leptotene, zygotene, and pachytene.

The protein localises to the cytoplasm. Its subcellular location is the nucleus. Functionally, is required for meiosis completion in both male and female germ cells. Confers stability to numerous meiotic mRNAs in gonads allowing proper initiation and progression into meiosis prophase I. The function may involve YTHDC2 and is independent of induction by retinoic acid (RA). Maintains an extended meiotic prophase I by properly promoting the transition from a mitotic to a meiotic cell cycle program by binding transcripts through its interaction with YTHDC2 that regulate the mitotic cell cycle. The sequence is that of Meiosis-specific coiled-coil domain-containing protein MEIOC from Mus musculus (Mouse).